Consider the following 386-residue polypeptide: V-type proton ATPase subunit B 2 (386 aa).

It belongs to the ATPase alpha/beta chains family. As to quaternary structure, V-ATPase is a heteromultimeric enzyme composed of a peripheral catalytic V1 complex (main components: subunits A, B, C, D, E, and F) attached to an integral membrane V0 proton pore complex (main component: the proteolipid protein).

Its function is as follows. Non-catalytic subunit of the peripheral V1 complex of vacuolar ATPase. V-ATPase is responsible for acidifying a variety of intracellular compartments in eukaryotic cells. The polypeptide is V-type proton ATPase subunit B 2 (Gossypium hirsutum (Upland cotton)).